The primary structure comprises 216 residues: Probable GTP-binding protein EngB (216 aa).

The 182-residue stretch at 24-205 folds into the EngB-type G domain; it reads QTPELAFVGR…WARIASAATD (182 aa). Residues 32-39, 59-63, 86-89, 153-156, and 184-186 contribute to the GTP site; these read GRSNVGKS, GRTRA, DLPG, TKMD, and FSA. Residues Ser-39 and Thr-61 each contribute to the Mg(2+) site.

It belongs to the TRAFAC class TrmE-Era-EngA-EngB-Septin-like GTPase superfamily. EngB GTPase family. Mg(2+) is required as a cofactor.

Necessary for normal cell division and for the maintenance of normal septation. This chain is Probable GTP-binding protein EngB, found in Anaeromyxobacter sp. (strain Fw109-5).